The sequence spans 158 residues: Sec-independent protein translocase protein TatB (158 aa).

The helical transmembrane segment at 2-22 threads the bilayer; it reads FDGIGFMELLLIGVLGLVVLG. The segment at 86–158 is disordered; sequence LKQAAQSVNR…DTSSNPKANG (73 aa). 3 stretches are compositionally biased toward polar residues: residues 88-107, 113-136, and 143-158; these read QAAQ…SQGT, QIHS…QHLT, and EPSQ…KANG.

Belongs to the TatB family. As to quaternary structure, the Tat system comprises two distinct complexes: a TatABC complex, containing multiple copies of TatA, TatB and TatC subunits, and a separate TatA complex, containing only TatA subunits. Substrates initially bind to the TatABC complex, which probably triggers association of the separate TatA complex to form the active translocon.

It is found in the cell inner membrane. Its function is as follows. Part of the twin-arginine translocation (Tat) system that transports large folded proteins containing a characteristic twin-arginine motif in their signal peptide across membranes. Together with TatC, TatB is part of a receptor directly interacting with Tat signal peptides. TatB may form an oligomeric binding site that transiently accommodates folded Tat precursor proteins before their translocation. This is Sec-independent protein translocase protein TatB from Shewanella putrefaciens (strain CN-32 / ATCC BAA-453).